The chain runs to 355 residues: Putative testis-specific Y-encoded-like protein 3 (355 aa).

The interval 1 to 131 is disordered; the sequence is MADKRAGTPE…GEEKQEVAAE (131 aa). A compositionally biased stretch (basic and acidic residues) spans 93–128; the sequence is ASEKAEDANKEEGAIFKKEPAEEVEKQQEGEEKQEV.

It belongs to the nucleosome assembly protein (NAP) family.

This Homo sapiens (Human) protein is Putative testis-specific Y-encoded-like protein 3 (TSPY26P).